A 25-amino-acid polypeptide reads, in one-letter code: Pregnancy-associated glycoprotein 74 (25 aa).

Asn-4 and Asn-21 each carry an N-linked (GlcNAc...) asparagine glycan.

This sequence belongs to the peptidase A1 family. In terms of processing, N-glycosylated. Placental cotyledons.

Its subcellular location is the secreted. The protein resides in the extracellular space. The sequence is that of Pregnancy-associated glycoprotein 74 from Bison bison (American bison).